The following is a 246-amino-acid chain: 3-oxoacyl-[acyl-carrier-protein] reductase FabG (246 aa).

Residues 11 to 14 (GASR), 62 to 63 (NV), and Asn89 each bind NADP(+). A substrate-binding site is contributed by Ser141. The Proton acceptor role is filled by Tyr154. NADP(+) contacts are provided by residues 154–158 (YVATK) and Ile187.

The protein belongs to the short-chain dehydrogenases/reductases (SDR) family. Homotetramer.

The enzyme catalyses a (3R)-hydroxyacyl-[ACP] + NADP(+) = a 3-oxoacyl-[ACP] + NADPH + H(+). The protein operates within lipid metabolism; fatty acid biosynthesis. Functionally, catalyzes the NADPH-dependent reduction of beta-ketoacyl-ACP substrates to beta-hydroxyacyl-ACP products, the first reductive step in the elongation cycle of fatty acid biosynthesis. This Staphylococcus aureus (strain Mu50 / ATCC 700699) protein is 3-oxoacyl-[acyl-carrier-protein] reductase FabG (fabG).